We begin with the raw amino-acid sequence, 456 residues long: Kynurenine 3-monooxygenase (456 aa).

It belongs to the aromatic-ring hydroxylase family. KMO subfamily. FAD is required as a cofactor.

Its subcellular location is the mitochondrion outer membrane. It carries out the reaction L-kynurenine + NADPH + O2 + H(+) = 3-hydroxy-L-kynurenine + NADP(+) + H2O. It functions in the pathway cofactor biosynthesis; NAD(+) biosynthesis; quinolinate from L-kynurenine: step 1/3. In terms of biological role, catalyzes the hydroxylation of L-kynurenine (L-Kyn) to form 3-hydroxy-L-kynurenine (L-3OHKyn). Required for synthesis of quinolinic acid. The protein is Kynurenine 3-monooxygenase of Candida albicans (strain SC5314 / ATCC MYA-2876) (Yeast).